The following is a 181-amino-acid chain: Organelle RRM domain-containing protein 6, chloroplastic (181 aa).

A chloroplast-targeting transit peptide spans 1 to 44; it reads MAISLGRVVVPSCTISGDRLFIPNFSAICSVSCGRINVGTGVIS. The 79-residue stretch at 77-155 folds into the RRM domain; sequence TKLYVSGLSF…RVIFVEEAKT (79 aa). Over residues 155–169 the composition is skewed to basic and acidic residues; sequence TRSDMSRAKPRRDFP. A disordered region spans residues 155-181; sequence TRSDMSRAKPRRDFPKPQSKPRTFRTW.

Interacts with MORF8/RIP1, MORF2/RIP2, MORF9/RIP9 and VAR3/OZ1.

It localises to the plastid. The protein localises to the chloroplast. Its function is as follows. Involved in C-to-U editing of chloroplastic RNA. Required for the photosynthetic subunit psbF transcript editing in chloroplast. This chain is Organelle RRM domain-containing protein 6, chloroplastic, found in Arabidopsis thaliana (Mouse-ear cress).